Here is a 481-residue protein sequence, read N- to C-terminus: uncharacterized protein (481 aa).

10 consecutive transmembrane segments (helical) span residues 32–52, 82–102, 137–157, 173–193, 204–224, 258–278, 289–309, 348–368, 392–412, and 418–438; these read LSWLFMFICAGLGSSTLYWGV, FFHWGISAWATYTLASLIMAY, MFLIATVGALTISLVVTAATF, VQAFVILLSGGIFCLSSWIGI, VGWGAFLLPLLVLIVGPTEFI, WTVFYWLWWISYTPGVAMFVT, VIWGLILGSTVGCWFFFGVME, LFLAAYLGVMIIFLASHMDAV, LFWCVVITLIPLSILFTGASL, and TVVLTALPFLVILLVKVGGFI.

The protein belongs to the BCCT transporter (TC 2.A.15) family.

The protein resides in the cell inner membrane. In terms of biological role, probable transporter whose substrate is unknown. Is not involved in aerobic D-malate transport. This is an uncharacterized protein from Escherichia coli (strain K12).